Consider the following 102-residue polypeptide: RNA-binding protein Hfq (102 aa).

The 60-residue stretch at 9–68 (DPFLNALRRERVPVSIYLVNGIKLQGQIESFDQFVILLKNTVSQMVYKHAISTVVPSRPV) folds into the Sm domain. Residues 63-102 (VPSRPVSHHSNNAGGSTSSNYHHGSSAQNTSAQQDSEENE) form a disordered region. A compositionally biased stretch (polar residues) spans 70 to 96 (HHSNNAGGSTSSNYHHGSSAQNTSAQQ).

It belongs to the Hfq family. In terms of assembly, homohexamer.

Functionally, RNA chaperone that binds small regulatory RNA (sRNAs) and mRNAs to facilitate mRNA translational regulation in response to envelope stress, environmental stress and changes in metabolite concentrations. Also binds with high specificity to tRNAs. The chain is RNA-binding protein Hfq from Escherichia coli O17:K52:H18 (strain UMN026 / ExPEC).